We begin with the raw amino-acid sequence, 394 residues long: NAD(P)H-quinone oxidoreductase subunit H (394 aa).

Belongs to the complex I 49 kDa subunit family. NDH-1 can be composed of about 15 different subunits; different subcomplexes with different compositions have been identified which probably have different functions.

The protein resides in the cellular thylakoid membrane. The catalysed reaction is a plastoquinone + NADH + (n+1) H(+)(in) = a plastoquinol + NAD(+) + n H(+)(out). It catalyses the reaction a plastoquinone + NADPH + (n+1) H(+)(in) = a plastoquinol + NADP(+) + n H(+)(out). Functionally, NDH-1 shuttles electrons from an unknown electron donor, via FMN and iron-sulfur (Fe-S) centers, to quinones in the respiratory and/or the photosynthetic chain. The immediate electron acceptor for the enzyme in this species is believed to be plastoquinone. Couples the redox reaction to proton translocation, and thus conserves the redox energy in a proton gradient. Cyanobacterial NDH-1 also plays a role in inorganic carbon-concentration. This chain is NAD(P)H-quinone oxidoreductase subunit H, found in Trichodesmium erythraeum (strain IMS101).